The sequence spans 408 residues: tRNA-specific 2-thiouridylase MnmA (408 aa).

ATP contacts are provided by residues Ala-27–Ser-34 and Leu-53. The active-site Nucleophile is the Cys-121. A disulfide bridge connects residues Cys-121 and Cys-222. Position 145 (Gly-145) interacts with ATP. An interaction with tRNA region spans residues Arg-172 to Gln-174. Cys-222 (cysteine persulfide intermediate) is an active-site residue.

Belongs to the MnmA/TRMU family.

The protein resides in the cytoplasm. The catalysed reaction is S-sulfanyl-L-cysteinyl-[protein] + uridine(34) in tRNA + AH2 + ATP = 2-thiouridine(34) in tRNA + L-cysteinyl-[protein] + A + AMP + diphosphate + H(+). Its function is as follows. Catalyzes the 2-thiolation of uridine at the wobble position (U34) of tRNA, leading to the formation of s(2)U34. The chain is tRNA-specific 2-thiouridylase MnmA from Rhizobium etli (strain ATCC 51251 / DSM 11541 / JCM 21823 / NBRC 15573 / CFN 42).